Here is a 130-residue protein sequence, read N- to C-terminus: Small ribosomal subunit protein uS8 (130 aa).

The protein belongs to the universal ribosomal protein uS8 family. As to quaternary structure, part of the 30S ribosomal subunit. Contacts proteins S5 and S12.

Functionally, one of the primary rRNA binding proteins, it binds directly to 16S rRNA central domain where it helps coordinate assembly of the platform of the 30S subunit. This chain is Small ribosomal subunit protein uS8, found in Stutzerimonas stutzeri (strain A1501) (Pseudomonas stutzeri).